A 692-amino-acid polypeptide reads, in one-letter code: Acyl-coenzyme A oxidase 2, peroxisomal (692 aa).

Residues 1-49 (MESRREKNPMTEEESDGLIAARRIQRLSLHLSPSLTPSPSLPLVQTETC) constitute a peroxisome transit peptide. FAD-binding residues include threonine 186, serine 192, glycine 225, arginine 365, glutamine 384, glycine 452, and threonine 473. Glutamate 475 acts as the Proton acceptor in catalysis. Aspartate 477 provides a ligand contact to FAD.

This sequence belongs to the acyl-CoA oxidase family. In terms of assembly, homodimer. Requires FAD as cofactor. Expressed mainly in flowers and young seedlings. Lower expression in roots, leaves and bracts.

It is found in the peroxisome. It carries out the reaction a 2,3-saturated acyl-CoA + O2 = a (2E)-enoyl-CoA + H2O2. Functionally, catalyzes the desaturation of long-chain acyl-CoAs to 2-trans-enoyl-CoAs. Active on substrates longer than C14 and mostly with C18-CoA. Activity on long-chain mono-unsaturated substrates is double than with the corresponding saturated substrates. In Arabidopsis thaliana (Mouse-ear cress), this protein is Acyl-coenzyme A oxidase 2, peroxisomal.